A 229-amino-acid chain; its full sequence is Cell division topological specificity factor homolog, chloroplastic (229 aa).

The N-terminal 30 residues, 1–30 (MAMSSGTLRISATLVSPYHHHHRNRLSLPS), are a transit peptide targeting the chloroplast. The interval 35-141 (VDFTGFISNG…KMILFSDRCD (107 aa)) is interaction with MIND1. The interval 142-169 (VSDEAKRKIVNNIIHALSDFVEIESEEK) is homodimerization.

The protein belongs to the MinE family. Homodimer. Interacts with MIND1. These interactions are required for proper intraplastidic localization. Binds to ARC3. In terms of tissue distribution, expressed in green tissues, especially at the shoot apex. Also present in leaves, stems, buds, and flowers, especially in sepals, siliques (tip and base), and anthers (mostly in pollen grains).

It is found in the plastid. The protein localises to the chloroplast. Its function is as follows. Acts as a topological specificity factor during plastid division and specify plastid constriction sites (such as the Z-ring) in a MCD1-dependent manner. Especially involved in epidermal plastids division in a FTSZ1-dependent manner. Required for the proper formation of FtsZ rings at the division site in nongreen plastids (e.g. etioplasts). May contribute to gravitropism in stems and hypocotyls. Stimulates MIND1 ATPase activity. In cooperation with MIND1, prevents FtsZ ring formation anywhere outside of the mid-plastids. This is Cell division topological specificity factor homolog, chloroplastic from Arabidopsis thaliana (Mouse-ear cress).